We begin with the raw amino-acid sequence, 419 residues long: G-protein coupled receptor 151 (419 aa).

The Extracellular segment spans residues 1–41; the sequence is MLAAAFADSNSSSMNVSFAHLHFAGGYLPSDSQDWRTIIPA. N-linked (GlcNAc...) asparagine glycosylation is found at asparagine 10 and asparagine 15. Residues 42 to 62 traverse the membrane as a helical segment; that stretch reads LLVAVCLVGFVGNLCVIGILL. Residues 63-71 lie on the Cytoplasmic side of the membrane; the sequence is HNAWKGKPS. Residues 72-92 form a helical membrane-spanning segment; it reads MIHSLILNLSLADLSLLLFSA. The Extracellular segment spans residues 93 to 116; it reads PIRATAYSKSVWDLGWFVCKSSDW. Cysteine 111 and cysteine 187 form a disulfide bridge. Residues 117–137 traverse the membrane as a helical segment; sequence FIHTCMAAKSLTIVVVAKVCF. Residues 138 to 153 are Cytoplasmic-facing; that stretch reads MYASDPAKQVSIHNYT. Residues 154 to 174 traverse the membrane as a helical segment; that stretch reads IWSVLVAIWTVASLLPLPEWF. Topologically, residues 175 to 201 are extracellular; it reads FSTIRHHEGVEMCLVDVPAVAEEFMSM. A helical membrane pass occupies residues 202–222; sequence FGKLYPLLAFGLPLFFASFYF. Over 223–252 the chain is Cytoplasmic; that stretch reads WRAYDQCKKRGTKTQNLRNQIRSKQVTVML. The chain crosses the membrane as a helical span at residues 253–273; sequence LSIAIISALLWLPEWVAWLWV. At 274-286 the chain is on the extracellular side; it reads WHLKAAGPAPPQG. Residues 287–307 traverse the membrane as a helical segment; that stretch reads FIALSQVLMFSISSANPLIFL. Topologically, residues 308-419 are cytoplasmic; the sequence is VMSEEFREGL…EDQETGEGVK (112 aa). The segment at 330–419 is disordered; that stretch reads PTVSESQETP…EDQETGEGVK (90 aa). Over residues 332–341 the composition is skewed to polar residues; sequence VSESQETPAG. Positions 410 to 419 are enriched in acidic residues; sequence EDQETGEGVK.

Belongs to the G-protein coupled receptor 1 family. As to expression, high expression in the spinal cord.

The protein resides in the cell membrane. Functionally, proton-sensing G-protein coupled receptor. The sequence is that of G-protein coupled receptor 151 (GPR151) from Homo sapiens (Human).